A 209-amino-acid polypeptide reads, in one-letter code: Pyridoxine/pyridoxamine 5'-phosphate oxidase (209 aa).

Substrate is bound by residues 5–8 (REEY) and K63. FMN-binding positions include 58 to 63 (RVVLLK), 73 to 74 (FT), R79, K80, and Q102. Substrate-binding residues include Y120, R124, and S128. Residues 137–138 (QS) and W181 contribute to the FMN site. 187–189 (RLH) is a binding site for substrate. Position 191 (R191) interacts with FMN.

Belongs to the pyridoxamine 5'-phosphate oxidase family. As to quaternary structure, homodimer. Requires FMN as cofactor.

It carries out the reaction pyridoxamine 5'-phosphate + O2 + H2O = pyridoxal 5'-phosphate + H2O2 + NH4(+). The catalysed reaction is pyridoxine 5'-phosphate + O2 = pyridoxal 5'-phosphate + H2O2. It participates in cofactor metabolism; pyridoxal 5'-phosphate salvage; pyridoxal 5'-phosphate from pyridoxamine 5'-phosphate: step 1/1. Its pathway is cofactor metabolism; pyridoxal 5'-phosphate salvage; pyridoxal 5'-phosphate from pyridoxine 5'-phosphate: step 1/1. Functionally, catalyzes the oxidation of either pyridoxine 5'-phosphate (PNP) or pyridoxamine 5'-phosphate (PMP) into pyridoxal 5'-phosphate (PLP). This is Pyridoxine/pyridoxamine 5'-phosphate oxidase from Alcanivorax borkumensis (strain ATCC 700651 / DSM 11573 / NCIMB 13689 / SK2).